The primary structure comprises 348 residues: Fe(3+) ions import ATP-binding protein FbpC (348 aa).

Positions 7–237 (VELRNVTKRF…PASRFMASFM (231 aa)) constitute an ABC transporter domain. ATP is bound at residue 39–46 (GPSGCGKT).

It belongs to the ABC transporter superfamily. Fe(3+) ion importer (TC 3.A.1.10) family. As to quaternary structure, the complex is composed of two ATP-binding proteins (FbpC), two transmembrane proteins (FbpB) and a solute-binding protein (FbpA).

It is found in the cell inner membrane. It carries out the reaction Fe(3+)(out) + ATP + H2O = Fe(3+)(in) + ADP + phosphate + H(+). Its function is as follows. Part of the ABC transporter complex FbpABC involved in Fe(3+) ions import. Responsible for energy coupling to the transport system. The polypeptide is Fe(3+) ions import ATP-binding protein FbpC (Escherichia coli (strain K12)).